The following is a 279-amino-acid chain: Pantothenate synthetase (279 aa).

Residue 27-34 (MGYLHEGH) participates in ATP binding. Residue histidine 34 is the Proton donor of the active site. Glutamine 58 contacts (R)-pantoate. Position 58 (glutamine 58) interacts with beta-alanine. Residue 144 to 147 (GKKD) participates in ATP binding. Glutamine 150 lines the (R)-pantoate pocket. Residues valine 173 and 181 to 184 (MSSR) contribute to the ATP site.

It belongs to the pantothenate synthetase family. As to quaternary structure, homodimer.

It localises to the cytoplasm. The catalysed reaction is (R)-pantoate + beta-alanine + ATP = (R)-pantothenate + AMP + diphosphate + H(+). It functions in the pathway cofactor biosynthesis; (R)-pantothenate biosynthesis; (R)-pantothenate from (R)-pantoate and beta-alanine: step 1/1. Its function is as follows. Catalyzes the condensation of pantoate with beta-alanine in an ATP-dependent reaction via a pantoyl-adenylate intermediate. The chain is Pantothenate synthetase from Citrifermentans bemidjiense (strain ATCC BAA-1014 / DSM 16622 / JCM 12645 / Bem) (Geobacter bemidjiensis).